A 160-amino-acid polypeptide reads, in one-letter code: Surface-adhesin protein E (160 aa).

The N-terminal stretch at 1 to 15 (MKKIILTLSLGLLTA) is a signal peptide. The N-palmitoyl cysteine moiety is linked to residue cysteine 16. Cysteine 16 is lipidated: S-diacylglycerol cysteine.

It localises to the cell outer membrane. The protein resides in the cell surface. Its function is as follows. Acts as a multifunctional adhesin involved in direct interactions with host epithelial cells and host proteins. The sequence is that of Surface-adhesin protein E (pe) from Haemophilus influenzae (strain ATCC 51907 / DSM 11121 / KW20 / Rd).